The chain runs to 161 residues: MAEVANNEQQAPQFNIQRVYTKDVSFETPNSPAVFQKEWNPEVKLDLDTRSAKLADDVYEVVLSLTVTAQNAGETAFLCEVQQAGIFSIAGLTEPQLAHSLGAYCPNILFPYAREAVGSLVGRGTFPQLNLAPVNFDALFAQYVQQRQAAAAAPAAEEANA.

The protein belongs to the SecB family. As to quaternary structure, homotetramer, a dimer of dimers. One homotetramer interacts with 1 SecA dimer.

It localises to the cytoplasm. Its function is as follows. One of the proteins required for the normal export of preproteins out of the cell cytoplasm. It is a molecular chaperone that binds to a subset of precursor proteins, maintaining them in a translocation-competent state. It also specifically binds to its receptor SecA. The chain is Protein-export protein SecB from Shewanella sp. (strain ANA-3).